A 332-amino-acid chain; its full sequence is 6-phosphogluconolactonase (332 aa).

The protein belongs to the cycloisomerase 2 family.

The catalysed reaction is 6-phospho-D-glucono-1,5-lactone + H2O = 6-phospho-D-gluconate + H(+). The protein operates within carbohydrate degradation; pentose phosphate pathway; D-ribulose 5-phosphate from D-glucose 6-phosphate (oxidative stage): step 2/3. In terms of biological role, catalyzes the hydrolysis of 6-phosphogluconolactone to 6-phosphogluconate. The sequence is that of 6-phosphogluconolactonase from Pectobacterium carotovorum subsp. carotovorum (strain PC1).